A 382-amino-acid chain; its full sequence is Na(+)/H(+) antiporter NhaA 2 (382 aa).

A run of 12 helical transmembrane segments spans residues 7-27, 28-48, 52-72, 88-108, 118-138, 147-167, 170-190, 206-226, 254-274, 285-305, 325-345, and 356-376; these read AGGV…NSYL, SGFY…AFEI, LLLW…GLEV, VLPG…YASF, GWAI…SLFG, LFLL…IALF, HELS…LFVL, LVVW…GFVI, VAYF…LGGI, LGII…VCWL, GVCL…SLAF, and VKLG…LILT.

It belongs to the NhaA Na(+)/H(+) (TC 2.A.33) antiporter family.

It is found in the cell inner membrane. The catalysed reaction is Na(+)(in) + 2 H(+)(out) = Na(+)(out) + 2 H(+)(in). Its function is as follows. Na(+)/H(+) antiporter that extrudes sodium in exchange for external protons. This chain is Na(+)/H(+) antiporter NhaA 2, found in Saccharophagus degradans (strain 2-40 / ATCC 43961 / DSM 17024).